The primary structure comprises 523 residues: Histidine ammonia-lyase (523 aa).

The segment at residues 148-150 is a cross-link (5-imidazolinone (Ala-Gly)); the sequence is ASG. Ser149 carries the post-translational modification 2,3-didehydroalanine (Ser).

It belongs to the PAL/histidase family. In terms of processing, contains an active site 4-methylidene-imidazol-5-one (MIO), which is formed autocatalytically by cyclization and dehydration of residues Ala-Ser-Gly.

The protein resides in the cytoplasm. It catalyses the reaction L-histidine = trans-urocanate + NH4(+). The protein operates within amino-acid degradation; L-histidine degradation into L-glutamate; N-formimidoyl-L-glutamate from L-histidine: step 1/3. In Chloroflexus aurantiacus (strain ATCC 29366 / DSM 635 / J-10-fl), this protein is Histidine ammonia-lyase.